Consider the following 331-residue polypeptide: Homoserine O-succinyltransferase (331 aa).

C141 functions as the Acyl-thioester intermediate in the catalytic mechanism. Substrate-binding residues include K162 and S190. H233 acts as the Proton acceptor in catalysis. E235 is an active-site residue. Residue R247 coordinates substrate.

Belongs to the MetA family.

It is found in the cytoplasm. The enzyme catalyses L-homoserine + succinyl-CoA = O-succinyl-L-homoserine + CoA. The protein operates within amino-acid biosynthesis; L-methionine biosynthesis via de novo pathway; O-succinyl-L-homoserine from L-homoserine: step 1/1. Functionally, transfers a succinyl group from succinyl-CoA to L-homoserine, forming succinyl-L-homoserine. The sequence is that of Homoserine O-succinyltransferase from Methylorubrum extorquens (strain DSM 6343 / CIP 106787 / DM4) (Methylobacterium extorquens).